A 134-amino-acid polypeptide reads, in one-letter code: MAQGRRVERVAALIRKETSELLIHGIRDERVHQGMVSITEVEVSGDLQHCRIFVSVFGEQAQKDEVMDGLEAARGFLRGELGRRLQMRRAPEIVFKLDLGIEKGTTVLHLLGELERERDERGDVTEGTELPDNP.

Belongs to the RbfA family. As to quaternary structure, monomer. Binds 30S ribosomal subunits, but not 50S ribosomal subunits or 70S ribosomes.

Its subcellular location is the cytoplasm. Its function is as follows. One of several proteins that assist in the late maturation steps of the functional core of the 30S ribosomal subunit. Associates with free 30S ribosomal subunits (but not with 30S subunits that are part of 70S ribosomes or polysomes). Required for efficient processing of 16S rRNA. May interact with the 5'-terminal helix region of 16S rRNA. The sequence is that of Ribosome-binding factor A from Synechococcus sp. (strain CC9311).